The primary structure comprises 214 residues: Alpha-S1-casein (214 aa).

The N-terminal stretch at 1–15 is a signal peptide; it reads MKLLILTCLVAVALA. Ser27 bears the Phosphoserine; in allele A mark. Ser56 carries the phosphoserine; in allele C modification. A phosphoserine mark is found at Ser61 and Ser63. The tract at residues 69 to 91 is disordered; that stretch reads MEDAKQMKAGSSSSSEEIVPNSA. Phosphoserine; in alleles A and C is present on Ser79. The residue at position 80 (Ser80) is a Phosphoserine. Ser81 is modified (phosphoserine; in alleles A and C). Ser82 carries the phosphoserine modification. Residue Ser83 is modified to Phosphoserine; in alleles A and C. Phosphoserine is present on Ser90. The interval 105–111 is opioid-like peptide sequence; it reads RYLGYLE. Position 130 is a phosphoserine (Ser130).

This sequence belongs to the alpha-casein family. Mammary gland specific. Secreted in milk.

The protein localises to the secreted. Important role in the capacity of milk to transport calcium phosphate. This is Alpha-S1-casein (CSN1S1) from Ovis aries (Sheep).